The chain runs to 480 residues: Transmembrane protein 161A (480 aa).

Positions 1-28 (MAVLGVQLVVTLFTATLMHRLAPHCSFA) are cleaved as a signal peptide. Residues 29-98 (RWLLCNGSLF…LTAVDALVLR (70 aa)) are Extracellular-facing. An N-linked (GlcNAc...) asparagine glycan is attached at Asn34. The chain crosses the membrane as a helical span at residues 99–119 (FFLEYQWFVDFAVYSVGVYLF). The Cytoplasmic segment spans residues 120 to 134 (TEAYYFVLGPVQETN). A helical transmembrane segment spans residues 135–155 (IAVFWCLLTLAFSLKVFLMVT). Residues 156-166 (RLYFSTKEGGE) lie on the Extracellular side of the membrane. A helical transmembrane segment spans residues 167 to 187 (RSVCLSFAFLFLLLAMLVQVV). The Cytoplasmic portion of the chain corresponds to 188 to 224 (REETLELGLEPGLASMTQHLEPILKKQDWDWTLPVIK). The chain crosses the membrane as a helical span at residues 225–245 (LAIRLGLAVLGSLLGAFLIFP). The Extracellular segment spans residues 246 to 263 (GLRLAQTHQDALTLSADR). The chain crosses the membrane as a helical span at residues 264-284 (PLLQLLLHTSFLSPLCTLWLW). The Cytoplasmic segment spans residues 285–304 (TKPVARDFLYQAPTRNMTFS). A helical transmembrane segment spans residues 305-325 (VPSEGAFDSLRLWVLVALCLL). Topologically, residues 326–370 (RLAVTRPHLQAYLCLAKARVEQLRKEAGRIEAREIQQRVVRVYCY) are extracellular. A helical transmembrane segment spans residues 371 to 391 (VTVVSLQYLTPLILTLHCTLL). Topologically, residues 392 to 450 (LKTLGGYSWALSSTPPPLAPSQPSEALIPVDPAGDEAQQTAAQVAGILGGLLTPLFLRG) are cytoplasmic. Residues 451 to 473 (MLAYIIWWTAACQLLSSLFGLYF) traverse the membrane as a helical segment. The Extracellular segment spans residues 474-480 (HQHLAAS).

The protein belongs to the TMEM161 family.

It is found in the membrane. Functionally, may play a role in protection against oxidative stress. Overexpression leads to reduced levels of oxidant-induced DNA damage and apoptosis. This chain is Transmembrane protein 161A (Tmem161a), found in Mus musculus (Mouse).